We begin with the raw amino-acid sequence, 95 residues long: Small ribosomal subunit protein bS20 (95 aa).

Belongs to the bacterial ribosomal protein bS20 family.

Its function is as follows. Binds directly to 16S ribosomal RNA. This chain is Small ribosomal subunit protein bS20, found in Ehrlichia chaffeensis (strain ATCC CRL-10679 / Arkansas).